Here is a 377-residue protein sequence, read N- to C-terminus: Geranylgeranyl transferase type-1 subunit beta (377 aa).

PFTB repeat units lie at residues 144 to 186 (KEAC…YMLN), 193 to 234 (MKKA…CLMG), 245 to 284 (LNRIKRWCIMRQQNGYHGRPNKPVDTCYSFWVGATLKLLK), and 291 to 333 (FEKN…SLME). Residues 219-221 (HGG) and 263-266 (RPNK) contribute to the geranylgeranyl diphosphate site. The Zn(2+) site is built by D269 and C271. 272 to 275 (YSFW) lines the geranylgeranyl diphosphate pocket. H321 is a Zn(2+) binding site.

This sequence belongs to the protein prenyltransferase subunit beta family. In terms of assembly, heterodimer of FNTA and PGGT1B. PGGT1B mediates interaction with substrate peptides. Requires Zn(2+) as cofactor. It depends on Mg(2+) as a cofactor.

The enzyme catalyses geranylgeranyl diphosphate + L-cysteinyl-[protein] = S-geranylgeranyl-L-cysteinyl-[protein] + diphosphate. In terms of biological role, catalyzes the transfer of a geranyl-geranyl moiety from geranyl-geranyl pyrophosphate to a cysteine at the fourth position from the C-terminus of proteins having the C-terminal sequence Cys-aliphatic-aliphatic-X. Known substrates include RAC1, RAC2, RAP1A and RAP1B. This is Geranylgeranyl transferase type-1 subunit beta (PGGT1B) from Homo sapiens (Human).